A 206-amino-acid chain; its full sequence is uncharacterized protein (206 aa).

This is an uncharacterized protein from Mycoplasma pneumoniae (strain ATCC 29342 / M129 / Subtype 1) (Mycoplasmoides pneumoniae).